A 562-amino-acid polypeptide reads, in one-letter code: Cell division protein FtsZ (562 aa).

GTP is bound by residues 23–27 (GAGGN), 110–112 (GTG), Glu-141, Arg-145, and Asp-189. A compositionally biased stretch (low complexity) spans 404 to 413 (PAAARPAQQP). Disordered stretches follow at residues 404–428 (PAAA…RLDP) and 462–562 (ETAQ…RQAN). A compositionally biased stretch (basic and acidic residues) spans 418-428 (FRPDPQLRLDP). 2 stretches are compositionally biased toward low complexity: residues 464–486 (AQAA…QPQR) and 500–510 (GLLRRPAAAQP).

This sequence belongs to the FtsZ family. Homodimer. Polymerizes to form a dynamic ring structure in a strictly GTP-dependent manner. Interacts directly with several other division proteins. Interacts with FtsZ-like protein (also called FtsZm).

Its subcellular location is the cytoplasm. Essential cell division protein that forms a contractile ring structure (Z ring) at the future cell division site. The regulation of the ring assembly controls the timing and the location of cell division. One of the functions of the FtsZ ring is to recruit other cell division proteins to the septum to produce a new cell wall between the dividing cells. Binds GTP and shows GTPase activity. Mild overexpression impairs cell division, leading to very elongated cells. Isolated protein forms filaments and bundles in the presence of GTP. The sequence is that of Cell division protein FtsZ from Magnetospirillum gryphiswaldense (strain DSM 6361 / JCM 21280 / NBRC 15271 / MSR-1).